A 230-amino-acid chain; its full sequence is Phosphoglycerate mutase-like protein 4 (230 aa).

Histidine 21 acts as the Tele-phosphohistidine intermediate in catalysis. Glutamate 96 acts as the Proton donor/acceptor in catalysis.

The protein belongs to the phosphoglycerate mutase family.

May play a role in carbohydrates metabolism. The chain is Phosphoglycerate mutase-like protein 4 from Arabidopsis thaliana (Mouse-ear cress).